Here is a 149-residue protein sequence, read N- to C-terminus: MRVVVQRVNKSSVKVDNEIVGSINKGFNVLVGIGKEDTIEDLKYMKDKVLNLRVFEDEEDKMNLSLKDVCGELLLISQFTLYGDCRKGRRPNFMNALGGDEAKKLFDEFVSMCREEGIKVETGVFGAHMVVDIENDGPVTLILDSKKNF.

The Gly-cisPro motif, important for rejection of L-amino acids motif lies at 137–138 (GP).

This sequence belongs to the DTD family. Homodimer.

The protein localises to the cytoplasm. The catalysed reaction is glycyl-tRNA(Ala) + H2O = tRNA(Ala) + glycine + H(+). The enzyme catalyses a D-aminoacyl-tRNA + H2O = a tRNA + a D-alpha-amino acid + H(+). Functionally, an aminoacyl-tRNA editing enzyme that deacylates mischarged D-aminoacyl-tRNAs. Also deacylates mischarged glycyl-tRNA(Ala), protecting cells against glycine mischarging by AlaRS. Acts via tRNA-based rather than protein-based catalysis; rejects L-amino acids rather than detecting D-amino acids in the active site. By recycling D-aminoacyl-tRNA to D-amino acids and free tRNA molecules, this enzyme counteracts the toxicity associated with the formation of D-aminoacyl-tRNA entities in vivo and helps enforce protein L-homochirality. In Clostridium perfringens (strain ATCC 13124 / DSM 756 / JCM 1290 / NCIMB 6125 / NCTC 8237 / Type A), this protein is D-aminoacyl-tRNA deacylase.